The primary structure comprises 193 residues: MITSLTGTILQRRPPWLWLDVQGVGYELEMPLSGFYQMPAEGAALTVHTHLTIREDAHLLYGFMTVAERDMFRLLIRVNGIGGKVALACLSGLPAERLSQAVAEGNTAQLTAIPGIGPKTAERLVVELRDKMGGIAPGPMGRGGAGDPRQEAIAALLTLGYKPAQASQAIAGLADGLGLEDLIRQSLQNLSRH.

The domain I stretch occupies residues 1–64 (MITSLTGTIL…EDAHLLYGFM (64 aa)). Residues 65–139 (TVAERDMFRL…DKMGGIAPGP (75 aa)) form a domain II region. The segment at 139-143 (PMGRG) is flexible linker. A domain III region spans residues 144–193 (GAGDPRQEAIAALLTLGYKPAQASQAIAGLADGLGLEDLIRQSLQNLSRH).

Belongs to the RuvA family. As to quaternary structure, homotetramer. Forms an RuvA(8)-RuvB(12)-Holliday junction (HJ) complex. HJ DNA is sandwiched between 2 RuvA tetramers; dsDNA enters through RuvA and exits via RuvB. An RuvB hexamer assembles on each DNA strand where it exits the tetramer. Each RuvB hexamer is contacted by two RuvA subunits (via domain III) on 2 adjacent RuvB subunits; this complex drives branch migration. In the full resolvosome a probable DNA-RuvA(4)-RuvB(12)-RuvC(2) complex forms which resolves the HJ.

The protein localises to the cytoplasm. In terms of biological role, the RuvA-RuvB-RuvC complex processes Holliday junction (HJ) DNA during genetic recombination and DNA repair, while the RuvA-RuvB complex plays an important role in the rescue of blocked DNA replication forks via replication fork reversal (RFR). RuvA specifically binds to HJ cruciform DNA, conferring on it an open structure. The RuvB hexamer acts as an ATP-dependent pump, pulling dsDNA into and through the RuvAB complex. HJ branch migration allows RuvC to scan DNA until it finds its consensus sequence, where it cleaves and resolves the cruciform DNA. The polypeptide is Holliday junction branch migration complex subunit RuvA (Acidithiobacillus ferrooxidans (strain ATCC 53993 / BNL-5-31) (Leptospirillum ferrooxidans (ATCC 53993))).